A 331-amino-acid polypeptide reads, in one-letter code: Aspartate carbamoyltransferase catalytic subunit (331 aa).

Arg-62 and Thr-63 together coordinate carbamoyl phosphate. Lys-90 serves as a coordination point for L-aspartate. Arg-112, His-145, and Gln-148 together coordinate carbamoyl phosphate. L-aspartate contacts are provided by Arg-185 and Arg-246. Carbamoyl phosphate-binding residues include Gly-287 and Pro-288.

Belongs to the aspartate/ornithine carbamoyltransferase superfamily. ATCase family. In terms of assembly, heterododecamer (2C3:3R2) of six catalytic PyrB chains organized as two trimers (C3), and six regulatory PyrI chains organized as three dimers (R2).

It carries out the reaction carbamoyl phosphate + L-aspartate = N-carbamoyl-L-aspartate + phosphate + H(+). Its pathway is pyrimidine metabolism; UMP biosynthesis via de novo pathway; (S)-dihydroorotate from bicarbonate: step 2/3. In terms of biological role, catalyzes the condensation of carbamoyl phosphate and aspartate to form carbamoyl aspartate and inorganic phosphate, the committed step in the de novo pyrimidine nucleotide biosynthesis pathway. In Synechocystis sp. (strain ATCC 27184 / PCC 6803 / Kazusa), this protein is Aspartate carbamoyltransferase catalytic subunit.